We begin with the raw amino-acid sequence, 888 residues long: E3 ubiquitin-protein ligase SH3RF1 (888 aa).

Residues 12 to 53 form an RING-type zinc finger; sequence CPVCLERLDASAKVLPCQHTFCKRCLLGIVGSRNELRCPECR. SH3 domains lie at 134 to 193 and 196 to 259; these read PQLP…IIKP and QPPP…FNSA. Positions 275 to 321 are disordered; sequence DAGECSSAAAQSSTAPKHSDTKKNTKKRHSFTSLTMANKSSQASQNR. Residues 292-362 are interaction with RAC1; it reads HSDTKKNTKK…APSQVHISTT (71 aa). A Phosphoserine modification is found at S304. Positions 305–321 are enriched in polar residues; sequence FTSLTMANKSSQASQNR. The tract at residues 440–543 is interaction with AKT2; the sequence is HLRPQTRPSV…STAGGPAQKL (104 aa). In terms of domain architecture, SH3 3 spans 445–506; sequence TRPSVYVAIY…PGNYVAPVTR (62 aa). Disordered stretches follow at residues 516–549, 617–637, and 693–741; these read VPMS…NGVA, SPAS…APLM, and PDSA…ASPT. Over residues 520–535 the composition is skewed to polar residues; the sequence is TAGQTSRGVTMVSPST. S532 is modified (phosphoserine). A compositionally biased stretch (polar residues) spans 693-704; that stretch reads PDSASLACGNSS. Residues 707–718 are compositionally biased toward basic and acidic residues; sequence KPDKDSKKEKKG. S735 bears the Phosphoserine mark. Residues 829–888 form the SH3 4 domain; that stretch reads VVCERHRVVVSYPPQSEAELELKEGDIVFVHKKREDGWFKGTLQRNGKTGLFPGSFVENI.

Belongs to the SH3RF family. Interacts with HERP1. Interacts with RAC1; in a GTP-dependent manner. Interacts with MAP3K10/MLK2 and MAP3K11/MLK3. Interacts with MAPK8IP; this interaction leads to the PJAC complex (POSH-JIP or SH3RF1/MAPK8IP apoptotic complex) with a 1:1 ratio. Interacts with SIAH1. Probably part of a signaling complex that may contain SH3RF1, MAPK8IP, DLK1, MAP2K4/MKK4, MAP2K7/MKK7, MAPK8/JNK1, MAPK9/JNK2, AKT1 and AKT2. Found in a complex with RAC2, MAP3K7/TAK1, MAP2K7/MKK7, MAPK8IP1/JIP1, MAPK8/JNK1 and MAPK9/JNK2. Found in a complex with RAC1, MAP3K11/MLK3, MAP2K7/MKK7, MAPK8IP1/JIP1 and MAPK8/JNK1. Interacts with SH3RF2. Post-translationally, phosphorylated at Ser-304 by AKT1 and AKT2. When phosphorylated, it has reduced ability to bind Rac. Autoubiquitinated. Ubiquitinated by SH3RF2, leading to proteasome-mediated degradation.

It localises to the cytoplasm. The protein resides in the perinuclear region. It is found in the cell projection. The protein localises to the lamellipodium. Its subcellular location is the golgi apparatus. It localises to the trans-Golgi network. The catalysed reaction is S-ubiquitinyl-[E2 ubiquitin-conjugating enzyme]-L-cysteine + [acceptor protein]-L-lysine = [E2 ubiquitin-conjugating enzyme]-L-cysteine + N(6)-ubiquitinyl-[acceptor protein]-L-lysine.. The protein operates within protein modification; protein ubiquitination. In terms of biological role, has E3 ubiquitin-protein ligase activity. In the absence of an external substrate, it can catalyze self-ubiquitination. Stimulates ubiquitination of potassium channel KCNJ1, enhancing it's dynamin-dependent and clathrin-independent endocytosis. Acts as a scaffold protein that coordinates with MAPK8IP1/JIP1 in organizing different components of the JNK pathway, including RAC1 or RAC2, MAP3K11/MLK3 or MAP3K7/TAK1, MAP2K7/MKK7, MAPK8/JNK1 and/or MAPK9/JNK2 into a functional multiprotein complex to ensure the effective activation of the JNK signaling pathway. Regulates the differentiation of CD4(+) and CD8(+) T-cells and promotes T-helper 1 (Th1) cell differentiation. Regulates the activation of MAPK8/JNK1 and MAPK9/JNK2 in CD4(+) T-cells and the activation of MAPK8/JNK1 in CD8(+) T-cells. Controls proper cortical neuronal migration and the formation of proximal cytoplasmic dilation in the leading process (PCDLP) in migratory neocortical neurons by regulating the proper localization of activated RAC1 and F-actin assembly. This Pongo abelii (Sumatran orangutan) protein is E3 ubiquitin-protein ligase SH3RF1 (SH3RF1).